The chain runs to 315 residues: Olfactory receptor 56A3 (315 aa).

The Extracellular portion of the chain corresponds to 1–29 (MTTHRNDTLSTEASDFLLNCFVRSPSWQH). The N-linked (GlcNAc...) asparagine glycan is linked to Asn-6. The chain crosses the membrane as a helical span at residues 30–50 (WLSLPLSLLFLLAVGANTTLL). The Cytoplasmic portion of the chain corresponds to 51-58 (MTIWLEAS). A helical transmembrane segment spans residues 59-79 (LHQPLYYLLSLLSLLDIVLCL). The Extracellular portion of the chain corresponds to 80–103 (TVIPKVLTIFWFDLRPISFPACFL). The cysteines at positions 101 and 193 are disulfide-linked. A helical membrane pass occupies residues 104–124 (QMYIMNCFLAMESCTFMVMAY). The Cytoplasmic portion of the chain corresponds to 125–143 (DRYVAICHPLRYPSIITDH). A helical transmembrane segment spans residues 144–164 (FVVKAAMFILTRNVLMTLPIP). Residues 165-200 (ILSAQLRYCGRNVIENCICANMSVSRLSCDDVTINH) are Extracellular-facing. An N-linked (GlcNAc...) asparagine glycan is attached at Asn-185. The helical transmembrane segment at 201–221 (LYQFAGGWTLLGSDLILIFLS) threads the bilayer. Over 222-241 (YTFILRAVLRLKAEGAVAKA) the chain is Cytoplasmic. Residues 242–262 (LSTCGSHFMLILFFSTILLVF) form a helical membrane-spanning segment. The Extracellular portion of the chain corresponds to 263–277 (VLTHVAKKKVSPDVP). A helical membrane pass occupies residues 278 to 298 (VLLNVLHHVIPAALNPIIYGV). Topologically, residues 299 to 315 (RTQEIKQGMQRLLKKGC) are cytoplasmic.

The protein belongs to the G-protein coupled receptor 1 family.

It is found in the cell membrane. Functionally, odorant receptor. In Homo sapiens (Human), this protein is Olfactory receptor 56A3 (OR56A3).